The sequence spans 208 residues: MDNSTPPPGGFKGGLGSIFGGGTPEYSNTELSGVPLTGMSPLSPYLNVDPRYLIQDTDEFILPTGANKTRGRFELAFFTIGGCCITGAAFGTLNGLRMGLSETRDMPWSKPRNVQILNMVTRQGASWANTLGSVALLYSVFGVAIEKARGAEDDLNTVAAGTLTGMVFKSTGGLKGVARGGLIGLAMSGLYALYNNWDHLKGKSPSHY.

A run of 3 helical transmembrane segments spans residues 73 to 93 (FELA…FGTL), 125 to 145 (ASWA…GVAI), and 173 to 193 (GLKG…LYAL).

This sequence belongs to the Tim17/Tim22/Tim23 family. As to quaternary structure, component of the TIM23 complex at least composed of timm23, timm17 and timm50. The complex interacts with the timm44 component of the PAM complex.

Its subcellular location is the mitochondrion inner membrane. Essential component of the TIM23 complex, a complex that mediates the translocation of transit peptide-containing proteins across the mitochondrial inner membrane. Plays an essential role in early embryonic development. The protein is Mitochondrial import inner membrane translocase subunit Tim23 (timm23) of Danio rerio (Zebrafish).